The following is a 544-amino-acid chain: T-complex protein 1 subunit gamma (544 aa).

A disulfide bridge connects residues C368 and C374. Residues 525–544 form a disordered region; that stretch reads SKKRGGNEPTNPAAMAQGQE.

It belongs to the TCP-1 chaperonin family. As to quaternary structure, heterooligomeric complex of about 850 to 900 kDa that forms two stacked rings, 12 to 16 nm in diameter.

Its subcellular location is the cytoplasm. Its function is as follows. Molecular chaperone; assists the folding of proteins upon ATP hydrolysis. Known to play a role, in vitro, in the folding of actin and tubulin. This chain is T-complex protein 1 subunit gamma, found in Drosophila melanogaster (Fruit fly).